A 123-amino-acid polypeptide reads, in one-letter code: U11/U12 small nuclear ribonucleoprotein 25 kDa protein (123 aa).

A Ubiquitin-like domain is found at methionine 32–lysine 123.

As to quaternary structure, component of the U11/U12 snRNPs that are part of the U12-type spliceosome.

It is found in the nucleus. The protein is U11/U12 small nuclear ribonucleoprotein 25 kDa protein (Snrnp25) of Mus musculus (Mouse).